The sequence spans 145 residues: UPF0310 protein Mvan_0064 (145 aa).

This sequence belongs to the UPF0310 family.

The polypeptide is UPF0310 protein Mvan_0064 (Mycolicibacterium vanbaalenii (strain DSM 7251 / JCM 13017 / BCRC 16820 / KCTC 9966 / NRRL B-24157 / PYR-1) (Mycobacterium vanbaalenii)).